A 1338-amino-acid polypeptide reads, in one-letter code: P-type sodium-transporting ATPase4 (1338 aa).

Residues 1-106 (MAARASADKL…KSISSVSQMH (106 aa)) form a disordered region. Residues 55-69 (AEEKVAGHDGESPRR) show a composition bias toward basic and acidic residues. The span at 91 to 104 (GHSQLGKSISSVSQ) shows a compositional bias: polar residues. The next 8 helical transmembrane spans lie at 229 to 249 (IFIQQFLSPVVLLLLVAAIAS), 255 to 275 (WVEGAAIFIIVTLNASLATYM), 418 to 438 (LGGMIGLIAICVLIIVVVVAI), 456 to 476 (IVLVAVGFAVSSIPEGLPMVV), 985 to 1005 (FVCFLLGTNIGEIIYLTIAIA), 1068 to 1088 (IFEAGCVLMSLALGLYLCTGV), 1261 to 1281 (MHLACSISATLTSLLTIVPGI), and 1288 to 1308 (CALPWYLYLFAIGCGFVNLIL).

It belongs to the cation transport ATPase (P-type) (TC 3.A.3) family.

The protein localises to the cell membrane. The catalysed reaction is Na(+)(in) + ATP + H2O = Na(+)(out) + ADP + phosphate + H(+). Its activity is regulated as follows. Inhibited by cipargamin, a synthetic spiroindolone. Inhibited by pyrazoleamide PA21A050, structurally unrelated to the spiroindolones. Inhibited by (+)-SJ733, a dihydroisoquinolone compound. Its function is as follows. Sodium-exporting ATPase. Required for the extrusion of Na(+) from the parasites to maintain a low cytosolic concentration of Na(+). Required for maintaining the viability of extracellular parasites but not for intracellular growth, egress or invasion. Involved in parasite virulence. This chain is P-type sodium-transporting ATPase4, found in Toxoplasma gondii (strain ATCC 50861 / VEG).